The following is a 212-amino-acid chain: Protein Thf1 (212 aa).

A coiled-coil region spans residues 179–201 (ERMEQAVELMQETLAADRRKKEK).

This sequence belongs to the THF1 family.

Functionally, may be involved in photosynthetic membrane biogenesis. This is Protein Thf1 from Parasynechococcus marenigrum (strain WH8102).